A 682-amino-acid polypeptide reads, in one-letter code: Nisin leader peptide-processing serine protease NisP (682 aa).

A signal peptide spans 1-22; the sequence is MKKILGFLFIVCSLGLSATVHG. The propeptide occupies 23–195; that stretch reads ETTNSQQLLS…RKAKEVVSLR (173 aa). Positions 231–566 constitute a Peptidase S8 domain; sequence QWDMKYVTNN…VDLLNGKNKA (336 aa). Residues aspartate 259, histidine 306, and serine 512 each act as charge relay system in the active site. The LPXTG sorting signal motif lies at 652-656; it reads LPVTG. Threonine 655 is subject to Pentaglycyl murein peptidoglycan amidated threonine. Residues 656–682 constitute a propeptide, removed by sortase; that stretch reads GDGEDFLPALGIVCISILGILKRKTKN.

This sequence belongs to the peptidase S8 family.

The protein resides in the secreted. It localises to the cell wall. Its pathway is antibiotic biosynthesis; nisin biosynthesis. Functionally, cleaves the lantibiotic nisin precursor peptide. The protein is Nisin leader peptide-processing serine protease NisP (nisP) of Lactococcus lactis subsp. lactis (Streptococcus lactis).